The chain runs to 439 residues: Acyl-coenzyme A thioesterase 9, mitochondrial (439 aa).

A mitochondrion-targeting transit peptide spans 1–21 (MRRAALRLCALGKGQLTPGRG). 2 HotDog ACOT-type domains span residues 84-209 (KDSY…RDSE) and 289-401 (ENSK…EKEV). Lys-103 is modified (N6-acetyllysine).

It belongs to the acyl coenzyme A hydrolase family. In terms of assembly, interacts with NYAP1, NYAP2 and MYO16.

It is found in the mitochondrion. It localises to the mitochondrion matrix. Its subcellular location is the mitochondrion inner membrane. It carries out the reaction butanoyl-CoA + H2O = butanoate + CoA + H(+). It catalyses the reaction propanoyl-CoA + H2O = propanoate + CoA + H(+). The enzyme catalyses hexadecanoyl-CoA + H2O = hexadecanoate + CoA + H(+). The catalysed reaction is octanoyl-CoA + H2O = octanoate + CoA + H(+). It carries out the reaction decanoyl-CoA + H2O = decanoate + CoA + H(+). It catalyses the reaction tetradecanoyl-CoA + H2O = tetradecanoate + CoA + H(+). The enzyme catalyses 4,8-dimethylnonanoyl-CoA + H2O = 4,8-dimethylnonanoate + CoA + H(+). The catalysed reaction is 3-methylbutanoyl-CoA + H2O = 3-methylbutanoate + CoA + H(+). It carries out the reaction 2-methylpropanoyl-CoA + H2O = 2-methylpropanoate + CoA + H(+). It participates in lipid metabolism; fatty acid metabolism. With respect to regulation, strongly inhibited by NADH and CoA. Mitochondrial acyl-CoA thioesterase. Catalyzes the hydrolysis of acyl-CoAs into free fatty acids and coenzyme A (CoA), regulating their respective intracellular levels. Regulates both mitochondrial lipid and amino acid metabolism. This is Acyl-coenzyme A thioesterase 9, mitochondrial from Homo sapiens (Human).